The following is a 178-amino-acid chain: Large ribosomal subunit protein uL6 (178 aa).

This sequence belongs to the universal ribosomal protein uL6 family. In terms of assembly, part of the 50S ribosomal subunit.

Functionally, this protein binds to the 23S rRNA, and is important in its secondary structure. It is located near the subunit interface in the base of the L7/L12 stalk, and near the tRNA binding site of the peptidyltransferase center. The sequence is that of Large ribosomal subunit protein uL6 from Listeria innocua serovar 6a (strain ATCC BAA-680 / CLIP 11262).